Reading from the N-terminus, the 303-residue chain is Ribonuclease P protein subunit p40 (303 aa).

Component of nuclear RNase P and RNase MRP ribonucleoproteins. RNase P consists of a catalytic RNA moiety and about 10 protein subunits; POP1, POP4, POP5, POP7, RPP14, RPP21, RPP25, RPP30, RPP38 and RPP40. Within the RNase P complex, POP1, POP7 and RPP25 form the 'finger' subcomplex, POP5, RPP14, RPP40 and homodimeric RPP30 form the 'palm' subcomplex, and RPP21, POP4 and RPP38 form the 'wrist' subcomplex. All subunits of the RNase P complex interact with the catalytic RNA. Several subunits of RNase P are also part of the RNase MRP complex. RNase MRP consists of a catalytic RNA moiety and about 8 protein subunits; POP1, POP7, RPP25, RPP30, RPP38, RPP40 and possibly also POP4 and POP5.

The protein resides in the nucleus. The protein localises to the nucleolus. Its function is as follows. Component of ribonuclease P, a ribonucleoprotein complex that generates mature tRNA molecules by cleaving their 5'-ends. Also a component of the MRP ribonuclease complex, which cleaves pre-rRNA sequences. The polypeptide is Ribonuclease P protein subunit p40 (RPP40) (Bos taurus (Bovine)).